The sequence spans 110 residues: Guanine nucleotide-binding protein subunit gamma (110 aa).

C106 carries S-palmitoyl cysteine lipidation. A Cysteine methyl ester modification is found at C107. The S-farnesyl cysteine moiety is linked to residue C107. The propeptide at 108-110 (TLM) is removed in mature form.

This sequence belongs to the G protein gamma family. G proteins are composed of 3 units, alpha, beta and gamma. The beta-gamma subunit complex (STE4-STE18 complex) interacts with PLP1 and PLP2.

It localises to the membrane. Functionally, implicated in the pheromone A- and alpha-factor response pathway. The beta and gamma chains of the putative yeast mating response pathway G protein play a positive role in initiation of the mating response. This chain is Guanine nucleotide-binding protein subunit gamma (STE18), found in Saccharomyces cerevisiae (strain ATCC 204508 / S288c) (Baker's yeast).